A 374-amino-acid polypeptide reads, in one-letter code: Chaperone protein DnaJ (374 aa).

The J domain maps to 4 to 69 (SYYEILEITQ…EKRAIYDRYG (66 aa)). Residues 136 to 213 (GCKKNIDFTY…CKGLGYNESK (78 aa)) form a CR-type zinc finger. Positions 149, 152, 165, 168, 187, 190, 201, and 204 each coordinate Zn(2+). CXXCXGXG motif repeat units lie at residues 149-156 (CKTCNGTG), 165-172 (CPKCQGRG), 187-194 (CPDCQGSG), and 201-208 (CNDCKGLG).

Belongs to the DnaJ family. Homodimer. The cofactor is Zn(2+).

The protein resides in the cytoplasm. Its function is as follows. Participates actively in the response to hyperosmotic and heat shock by preventing the aggregation of stress-denatured proteins and by disaggregating proteins, also in an autonomous, DnaK-independent fashion. Unfolded proteins bind initially to DnaJ; upon interaction with the DnaJ-bound protein, DnaK hydrolyzes its bound ATP, resulting in the formation of a stable complex. GrpE releases ADP from DnaK; ATP binding to DnaK triggers the release of the substrate protein, thus completing the reaction cycle. Several rounds of ATP-dependent interactions between DnaJ, DnaK and GrpE are required for fully efficient folding. Also involved, together with DnaK and GrpE, in the DNA replication of plasmids through activation of initiation proteins. This Campylobacter jejuni subsp. doylei (strain ATCC BAA-1458 / RM4099 / 269.97) protein is Chaperone protein DnaJ.